The chain runs to 578 residues: 2-hydroxyacyl-CoA lyase 1 (578 aa).

Ser4 is subject to Phosphoserine. Glu60 is a binding site for thiamine diphosphate. An N6-succinyllysine mark is found at Lys351, Lys358, and Lys365. The segment at 401-486 (TMDIGRTVLQ…LLVVNNNGIY (86 aa)) is thiamine pyrophosphate binding. The Mg(2+) site is built by Asp455 and Asn482. A Microbody targeting signal motif is present at residues 576–578 (SNM).

Belongs to the TPP enzyme family. Homotetramer. Requires Mg(2+) as cofactor. Thiamine diphosphate is required as a cofactor. As to expression, widely expressed.

The protein resides in the peroxisome. It carries out the reaction a 2-hydroxy-3-methyl fatty acyl-CoA = a 2-methyl-branched fatty aldehyde + formyl-CoA. It catalyses the reaction an (R)-2-hydroxy-long-chain-fatty acyl-CoA = a long-chain fatty aldehyde + formyl-CoA. The enzyme catalyses 2-hydroxy-3-methylhexadecanoyl-CoA = 2-methylpentadecanal + formyl-CoA. The catalysed reaction is 2-hydroxyoctadecanoyl-CoA = heptadecanal + formyl-CoA. It carries out the reaction 2-hydroxyphytanoyl-CoA = 2,6,10,14-tetramethylpentadecanal + formyl-CoA. The protein operates within lipid metabolism; fatty acid metabolism. Functionally, peroxisomal 2-OH acyl-CoA lyase involved in the cleavage (C1 removal) reaction in the fatty acid alpha-oxydation in a thiamine pyrophosphate (TPP)-dependent manner. Involved in the degradation of 3-methyl-branched fatty acids like phytanic acid and the shortening of 2-hydroxy long-chain fatty acids. Plays a significant role in the biosynthesis of heptadecanal in the liver. The chain is 2-hydroxyacyl-CoA lyase 1 from Homo sapiens (Human).